The chain runs to 364 residues: tRNA-specific 2-thiouridylase MnmA 1 (364 aa).

ATP is bound by residues 10–17 and methionine 36; that span reads GMSGGVDS. Cysteine 106 acts as the Nucleophile in catalysis. An intrachain disulfide couples cysteine 106 to cysteine 204. An ATP-binding site is contributed by glycine 130. The segment at 154-156 is interaction with tRNA; the sequence is KDQ. The active-site Cysteine persulfide intermediate is cysteine 204. An interaction with tRNA region spans residues 310–311; that stretch reads RY.

It belongs to the MnmA/TRMU family.

It localises to the cytoplasm. The catalysed reaction is S-sulfanyl-L-cysteinyl-[protein] + uridine(34) in tRNA + AH2 + ATP = 2-thiouridine(34) in tRNA + L-cysteinyl-[protein] + A + AMP + diphosphate + H(+). Functionally, catalyzes the 2-thiolation of uridine at the wobble position (U34) of tRNA, leading to the formation of s(2)U34. This Thermoanaerobacter pseudethanolicus (strain ATCC 33223 / 39E) (Clostridium thermohydrosulfuricum) protein is tRNA-specific 2-thiouridylase MnmA 1.